Here is a 796-residue protein sequence, read N- to C-terminus: ATP-dependent DNA helicase PIF6 (796 aa).

The tract at residues 197 to 230 is disordered; the sequence is RPTGLPSAHSGGKLPKHMGGDELNPQLEGSTTPG. Residue 255–262 participates in ATP binding; sequence GSAGTGKT. Residues 636–655 mediate DNA binding; it reads QAYVALSRVRSREDLMLTAF. Disordered regions lie at residues 692–719 and 762–796; these read KGKT…PEEH and TSSA…VDDD.

The protein belongs to the helicase family. PIF1 subfamily. Monomer. Mg(2+) is required as a cofactor.

It is found in the nucleus. The catalysed reaction is Couples ATP hydrolysis with the unwinding of duplex DNA at the replication fork by translocating in the 5'-3' direction. This creates two antiparallel DNA single strands (ssDNA). The leading ssDNA polymer is the template for DNA polymerase III holoenzyme which synthesizes a continuous strand.. It catalyses the reaction ATP + H2O = ADP + phosphate + H(+). Functionally, DNA-dependent ATPase and 5'-3' DNA helicase required for the maintenance of genome stability. The protein is ATP-dependent DNA helicase PIF6 of Trypanosoma brucei brucei (strain 927/4 GUTat10.1).